The following is a 178-amino-acid chain: Large ribosomal subunit protein uL5 (178 aa).

This sequence belongs to the universal ribosomal protein uL5 family. In terms of assembly, part of the 50S ribosomal subunit; contacts the 5S rRNA and probably tRNA. Forms a bridge to the 30S subunit in the 70S ribosome.

Functionally, this is one of the proteins that bind and probably mediate the attachment of the 5S RNA into the large ribosomal subunit, where it forms part of the central protuberance. In the 70S ribosome it contacts protein S13 of the 30S subunit (bridge B1b), connecting the 2 subunits; this bridge is implicated in subunit movement. May contact the P site tRNA; the 5S rRNA and some of its associated proteins might help stabilize positioning of ribosome-bound tRNAs. This chain is Large ribosomal subunit protein uL5, found in Sulfolobus acidocaldarius (strain ATCC 33909 / DSM 639 / JCM 8929 / NBRC 15157 / NCIMB 11770).